The primary structure comprises 104 residues: Large ribosomal subunit protein bL21 (104 aa).

Belongs to the bacterial ribosomal protein bL21 family. In terms of assembly, part of the 50S ribosomal subunit. Contacts protein L20.

Its function is as follows. This protein binds to 23S rRNA in the presence of protein L20. The protein is Large ribosomal subunit protein bL21 of Helicobacter hepaticus (strain ATCC 51449 / 3B1).